A 481-amino-acid polypeptide reads, in one-letter code: uncharacterized protein (481 aa).

The next 11 membrane-spanning stretches (helical) occupy residues 14–34, 46–66, 90–110, 134–154, 167–187, 218–238, 258–278, 303–323, 377–397, 411–431, and 446–466; these read LGFC…GIFL, FAPM…IVFA, IGIY…GVLA, FSVK…INLF, TVGK…IITT, FSSM…FESI, IAIF…MLLG, IIVV…SFGA, LAVI…IALA, AFTD…LAVS, and YFSI…AYLH.

It belongs to the amino acid-polyamine-organocation (APC) superfamily.

The protein resides in the cell membrane. Functionally, probable amino-acid or metabolite transport protein. This is an uncharacterized protein from Mycobacterium tuberculosis (strain CDC 1551 / Oshkosh).